We begin with the raw amino-acid sequence, 293 residues long: Formamidopyrimidine-DNA glycosylase (293 aa).

Pro-2 acts as the Schiff-base intermediate with DNA in catalysis. Glu-3 functions as the Proton donor in the catalytic mechanism. The Proton donor; for beta-elimination activity role is filled by Lys-58. DNA contacts are provided by His-104, Arg-123, and Lys-166. The FPG-type zinc-finger motif lies at 257-293 (QVYDREGEPCRTDGCGGVVKRFVQNGRSTFWCPKCQR). Arg-283 (proton donor; for delta-elimination activity) is an active-site residue.

Belongs to the FPG family. In terms of assembly, monomer. It depends on Zn(2+) as a cofactor.

The catalysed reaction is Hydrolysis of DNA containing ring-opened 7-methylguanine residues, releasing 2,6-diamino-4-hydroxy-5-(N-methyl)formamidopyrimidine.. The enzyme catalyses 2'-deoxyribonucleotide-(2'-deoxyribose 5'-phosphate)-2'-deoxyribonucleotide-DNA = a 3'-end 2'-deoxyribonucleotide-(2,3-dehydro-2,3-deoxyribose 5'-phosphate)-DNA + a 5'-end 5'-phospho-2'-deoxyribonucleoside-DNA + H(+). Functionally, involved in base excision repair of DNA damaged by oxidation or by mutagenic agents. Acts as a DNA glycosylase that recognizes and removes damaged bases. Has a preference for oxidized purines, such as 7,8-dihydro-8-oxoguanine (8-oxoG). Has AP (apurinic/apyrimidinic) lyase activity and introduces nicks in the DNA strand. Cleaves the DNA backbone by beta-delta elimination to generate a single-strand break at the site of the removed base with both 3'- and 5'-phosphates. The sequence is that of Formamidopyrimidine-DNA glycosylase from Bradyrhizobium sp. (strain BTAi1 / ATCC BAA-1182).